A 184-amino-acid chain; its full sequence is uncharacterized protein (184 aa).

This is an uncharacterized protein from Clostridium acetobutylicum (strain ATCC 824 / DSM 792 / JCM 1419 / IAM 19013 / LMG 5710 / NBRC 13948 / NRRL B-527 / VKM B-1787 / 2291 / W).